Reading from the N-terminus, the 504-residue chain is Alpha-L-arabinofuranosidase C (504 aa).

4 N-linked (GlcNAc...) asparagine glycosylation sites follow: N81, N152, N269, and N329.

It belongs to the glycosyl hydrolase 51 family.

The protein localises to the secreted. It catalyses the reaction Hydrolysis of terminal non-reducing alpha-L-arabinofuranoside residues in alpha-L-arabinosides.. Its pathway is glycan metabolism; L-arabinan degradation. Its function is as follows. Alpha-L-arabinofuranosidase involved in the degradation of arabinoxylan, a major component of plant hemicellulose. Acts only on small linear 1,5-alpha-linked L-arabinofuranosyl oligosaccharides. This is Alpha-L-arabinofuranosidase C (abfC) from Emericella nidulans (strain FGSC A4 / ATCC 38163 / CBS 112.46 / NRRL 194 / M139) (Aspergillus nidulans).